A 457-amino-acid polypeptide reads, in one-letter code: NADH-ubiquinone oxidoreductase chain 4 (457 aa).

The next 12 membrane-spanning stretches (helical) occupy residues 22 to 42 (NLWPVTILQSAFLSIAAIALI), 59 to 79 (SMQLPLLVLSCWLTPLALIAS), 95 to 115 (IVLVIIITTSLIITFSSLELI), 116 to 136 (LFYIAFETTLVPTLILITRWG), 148 to 168 (FIFYTLFGSLPLLISLIALYF), 191 to 211 (LTVWWLLSILAFLVKMPIYGF), 223 to 243 (PVAGSMILAAILLKLGGYGLM), 257 to 277 (SSLPLVVFCCWGALVTSIICI), 282 to 302 (LKALIAYSSVGHMSIVAAGVF), 309 to 329 (INGALMLMIAHGLVSSALFAL), 350 to 370 (LILPLSTFWWLIMCAANLGFP), and 433 to 453 (LFLLHLLPLLLIIPTPNLVLI).

It belongs to the complex I subunit 4 family.

The protein resides in the mitochondrion membrane. The catalysed reaction is a ubiquinone + NADH + 5 H(+)(in) = a ubiquinol + NAD(+) + 4 H(+)(out). In terms of biological role, core subunit of the mitochondrial membrane respiratory chain NADH dehydrogenase (Complex I) that is believed to belong to the minimal assembly required for catalysis. Complex I functions in the transfer of electrons from NADH to the respiratory chain. The immediate electron acceptor for the enzyme is believed to be ubiquinone. This chain is NADH-ubiquinone oxidoreductase chain 4 (ND4), found in Arbacia lixula (Black urchin).